Reading from the N-terminus, the 926-residue chain is Staphylococcal nuclease domain-containing protein 1 (926 aa).

Low complexity predominate over residues 1–17; the sequence is MATAANTATAAGAAKDA. Residues 1-24 form a disordered region; that stretch reads MATAANTATAAGAAKDAPPAPTKS. TNase-like domains lie at 23–167, 195–333, 346–505, and 535–674; these read KSLS…KWSP, NPVK…QWQD, KDFS…LHAK, and LRTE…IWTN. The region spanning 749–807 is the Tudor domain; that stretch reads TPKRGDLVAAQFTLDNQWYRAKVERVQGSNATVLYIDYGNKETLPTNRLAALPPAFSSE. Positions 760 to 788 are involved in dimethylarginine binding; it reads FTLDNQWYRAKVERVQGSNATVLYIDYGN.

As to quaternary structure, associates with the RNA-induced silencing complex (RISC). Interacts with the RISC components AGO2, Fmr1 and vig. Interacts with piwi. In terms of tissue distribution, expressed in adult ovaries and testis (at protein level).

Its subcellular location is the cytoplasm. The protein resides in the nucleus. It carries out the reaction Endonucleolytic cleavage to nucleoside 3'-phosphates and 3'-phosphooligonucleotide end-products.. In terms of biological role, endonuclease which shows activity towards both DNA and RNA substrates. Has a role in translation regulation throught its association with the with the RNA-induced silencing complex (RISC). Plays a role in spermatogenesis probably by negatively regulating piwi expression in the germline. Together with piwi, might be involved in transposon repression in the germline. The chain is Staphylococcal nuclease domain-containing protein 1 from Drosophila melanogaster (Fruit fly).